The following is a 333-amino-acid chain: Protein FAM170A (333 aa).

Disordered stretches follow at residues 1-45, 73-107, and 143-214; these read MKRR…GVGE, LQDS…PSYK, and ETSE…AKTP. The span at 10–29 shows a compositional bias: basic and acidic residues; that stretch reads LEIEESKEAGISKSQEDISH. A compositionally biased stretch (low complexity) spans 92–105; sequence TTAPSQQASSSCPS. Over residues 143–156 the composition is skewed to basic and acidic residues; the sequence is ETSESLEKQPRMEE. A compositionally biased stretch (polar residues) spans 170–179; it reads SDVSTRNLLS. Over residues 185–196 the composition is skewed to basic and acidic residues; that stretch reads GEEKEHEEKPES. Thr-213 is modified (phosphothreonine). The C2H2-type; degenerate zinc finger occupies 224–248; that stretch reads FRCMACCRVFATMESLQEHVQYGIR. Positions 267–333 are disordered; it reads MESESTQEEE…RKDHCDNSGS (67 aa). Residues 271-281 show a composition bias toward acidic residues; the sequence is STQEEEEDHTE. The span at 282-293 shows a compositional bias: basic and acidic residues; it reads ETEKPKEEKAEE. Phosphoserine is present on Ser-308.

This sequence belongs to the FAM170 family. In terms of tissue distribution, testis-specific.

It is found in the nucleus. Its function is as follows. Acts as a nuclear transcription factor that positively regulates the expression of heat shock genes. Binds to heat shock promoter elements (HSE). The sequence is that of Protein FAM170A (Fam170a) from Mus musculus (Mouse).